The sequence spans 256 residues: Triosephosphate isomerase (256 aa).

Residue 9–11 (NWK) coordinates substrate. The active-site Electrophile is the histidine 97. Glutamate 169 serves as the catalytic Proton acceptor. Substrate is bound by residues glycine 175, serine 214, and 235-236 (GG).

Belongs to the triosephosphate isomerase family. In terms of assembly, homodimer.

Its subcellular location is the cytoplasm. It carries out the reaction D-glyceraldehyde 3-phosphate = dihydroxyacetone phosphate. The protein operates within carbohydrate biosynthesis; gluconeogenesis. Its pathway is carbohydrate degradation; glycolysis; D-glyceraldehyde 3-phosphate from glycerone phosphate: step 1/1. Involved in the gluconeogenesis. Catalyzes stereospecifically the conversion of dihydroxyacetone phosphate (DHAP) to D-glyceraldehyde-3-phosphate (G3P). In Vibrio vulnificus (strain CMCP6), this protein is Triosephosphate isomerase.